A 219-amino-acid chain; its full sequence is Elongation factor Ts (219 aa).

Residues 82-85 (TDFV) form an involved in Mg(2+) ion dislocation from EF-Tu region.

Belongs to the EF-Ts family.

Its subcellular location is the cytoplasm. Associates with the EF-Tu.GDP complex and induces the exchange of GDP to GTP. It remains bound to the aminoacyl-tRNA.EF-Tu.GTP complex up to the GTP hydrolysis stage on the ribosome. The sequence is that of Elongation factor Ts from Gloeobacter violaceus (strain ATCC 29082 / PCC 7421).